Consider the following 343-residue polypeptide: Anthranilate phosphoribosyltransferase (343 aa).

Residues glycine 84, 87 to 88 (GD), threonine 92, 94 to 97 (NIST), 112 to 120 (KHGNRGVSS), and serine 124 contribute to the 5-phospho-alpha-D-ribose 1-diphosphate site. Glycine 84 serves as a coordination point for anthranilate. Serine 96 serves as a coordination point for Mg(2+). Asparagine 115 provides a ligand contact to anthranilate. Arginine 170 contributes to the anthranilate binding site. Aspartate 229 and glutamate 230 together coordinate Mg(2+).

Belongs to the anthranilate phosphoribosyltransferase family. As to quaternary structure, homodimer. It depends on Mg(2+) as a cofactor.

It catalyses the reaction N-(5-phospho-beta-D-ribosyl)anthranilate + diphosphate = 5-phospho-alpha-D-ribose 1-diphosphate + anthranilate. Its pathway is amino-acid biosynthesis; L-tryptophan biosynthesis; L-tryptophan from chorismate: step 2/5. Functionally, catalyzes the transfer of the phosphoribosyl group of 5-phosphorylribose-1-pyrophosphate (PRPP) to anthranilate to yield N-(5'-phosphoribosyl)-anthranilate (PRA). The sequence is that of Anthranilate phosphoribosyltransferase from Burkholderia pseudomallei (strain 1106a).